The chain runs to 83 residues: Mitochondrial import inner membrane translocase subunit Tim8 (83 aa).

The Twin CX3C motif signature appears at 35 to 60; that stretch reads CWDVCFADYRPPSKMDGKTQTCIQNC. 2 cysteine pairs are disulfide-bonded: Cys-35-Cys-60 and Cys-39-Cys-56.

Belongs to the small Tim family. As to quaternary structure, heterohexamer; composed of 3 copies of ddp-1/tim-8 and 3 copies of tin-13/tim-13, named soluble 70 kDa complex. Associates with the TIM22 complex, whose core is composed of tim-22.

Its subcellular location is the mitochondrion inner membrane. Functionally, mitochondrial intermembrane chaperone that participates in the import and insertion of some multi-pass transmembrane proteins into the mitochondrial inner membrane. Also required for the transfer of beta-barrel precursors from the TOM complex to the sorting and assembly machinery (SAM complex) of the outer membrane. Acts as a chaperone-like protein that protects the hydrophobic precursors from aggregation and guide them through the mitochondrial intermembrane space. The ddp-1/tim-8-tim-13 complex mediates the import of some proteins while the predominant tim-9/tin-9.1-tim-10/tin-10 70 kDa complex mediates the import of much more proteins. The protein is Mitochondrial import inner membrane translocase subunit Tim8 of Caenorhabditis elegans.